Reading from the N-terminus, the 530-residue chain is MDSNMMPQTAQQNAVFSKTNFAQQKLGQYQVVAPASPVCSRPGSSCSQPPTLFSNGPAVLTPTGSPPPIGFRPAVMLESEFGDSSYFPSTPPLSTSGSAVGSPKNYEVLQTPLNPMFSGLDGFVGVKSGYESTESSVLDWASCDSPPMTPVFIHSQPSRVPSLSSTTSDLSNISCPSLSPSPAPYARSVSSENDVDFCDPRNLTVPNTSNSSLAPEFTLDCLGEEEGSPSEQSALDTVLSQTAFDFSPAIASGLPAFEELSDFESEDDLSNLVKPGEGSRPRACTGSSIVSLGHGSFIADEDFSFDENDTFQFPSPSPPSSVEAVDDGHKDKRQKKTGTKDSQSAEPVMDTAAADNQTAEVEEQSEQASPVPSESHSSAEADTPSAPLPAPTNRRGRKQSLTEDPSKTFVCDLCNRRFRRQEHLKRHYRSLHTQEKPFECNECGKKFSRSDNLAQHARTHASGGAIVMNIIDNADPSAYEAGMVAPPPVDDYANYGKVLFQIAADVPGSASELSSEEASDNGKKKRKRSE.

2 consecutive C2H2-type zinc fingers follow at residues 409-432 (FVCDLCNRRFRRQEHLKRHYRSLH) and 438-460 (FECNECGKKFSRSDNLAQHARTH).

It is found in the nucleus. It localises to the cytoplasm. In terms of biological role, transcription factor that acts as a key downstream transcription factor in the HOG1-MAPK pathway. Plays crucial roles in the regulation of conidiation, virulence and multi-stress responses. In addition to regulating the expression of genes specifically involved in stress-response, conidiation and virulence, controls also expression of cellular signaling factors. This chain is C2H2-type transcription factor MSN2, found in Metarhizium robertsii (strain ARSEF 23 / ATCC MYA-3075) (Metarhizium anisopliae (strain ARSEF 23)).